Consider the following 239-residue polypeptide: Norbelladine 4'-O-methyltransferase (239 aa).

Residues Val55, Glu77, 79–80, Ser85, Asp103, and Ala132 contribute to the S-adenosyl-L-methionine site; that span reads GV. Asp155 provides a ligand contact to a divalent metal cation. Asp157 lines the S-adenosyl-L-methionine pocket. A divalent metal cation is bound by residues Asp181 and Asn182.

The protein belongs to the class I-like SAM-binding methyltransferase superfamily. Cation-dependent O-methyltransferase family. It depends on Mg(2+) as a cofactor. In terms of tissue distribution, mostly expressed in bulbs, and, to a lower extent, in stems and roots.

It catalyses the reaction norbelladine + S-adenosyl-L-methionine = 4'-O-methylnorbelladine + S-adenosyl-L-homocysteine + H(+). It participates in alkaloid biosynthesis. 4'-O-methyltransferase converting norbelladine to 4'-O-methylnorbelladine. 4'-O-methylnorbelladine is a precursor to all Amaryllidaceae alkaloids such as galanthamine, lycorine and haemanthamine, and including haemanthamine- and crinamine-type alkaloids, promising anticancer agents. The polypeptide is Norbelladine 4'-O-methyltransferase (Narcissus pseudonarcissus (Daffodil)).